The sequence spans 71 residues: ATP synthase subunit c 1 (71 aa).

2 helical membrane-spanning segments follow: residues 4–24 (FIGAGLATIGLGGAGIGVGHV) and 46–66 (LFVGIAFAEALGIFSFLIALL).

This sequence belongs to the ATPase C chain family. F-type ATPases have 2 components, F(1) - the catalytic core - and F(0) - the membrane proton channel. F(1) has five subunits: alpha(3), beta(3), gamma(1), delta(1), epsilon(1). F(0) has four main subunits: a(1), b(1), b'(1) and c(10-14). The alpha and beta chains form an alternating ring which encloses part of the gamma chain. F(1) is attached to F(0) by a central stalk formed by the gamma and epsilon chains, while a peripheral stalk is formed by the delta, b and b' chains.

The protein resides in the cell inner membrane. Functionally, f(1)F(0) ATP synthase produces ATP from ADP in the presence of a proton or sodium gradient. F-type ATPases consist of two structural domains, F(1) containing the extramembraneous catalytic core and F(0) containing the membrane proton channel, linked together by a central stalk and a peripheral stalk. During catalysis, ATP synthesis in the catalytic domain of F(1) is coupled via a rotary mechanism of the central stalk subunits to proton translocation. Key component of the F(0) channel; it plays a direct role in translocation across the membrane. A homomeric c-ring of between 10-14 subunits forms the central stalk rotor element with the F(1) delta and epsilon subunits. The chain is ATP synthase subunit c 1 from Cereibacter sphaeroides (strain ATCC 17029 / ATH 2.4.9) (Rhodobacter sphaeroides).